A 118-amino-acid chain; its full sequence is Small ribosomal subunit protein uS13 (118 aa).

The interval 93 to 118 (RGLPVRGQRTKTNARTRKGPRKPIRK) is disordered.

The protein belongs to the universal ribosomal protein uS13 family. Part of the 30S ribosomal subunit. Forms a loose heterodimer with protein S19. Forms two bridges to the 50S subunit in the 70S ribosome.

Located at the top of the head of the 30S subunit, it contacts several helices of the 16S rRNA. In the 70S ribosome it contacts the 23S rRNA (bridge B1a) and protein L5 of the 50S subunit (bridge B1b), connecting the 2 subunits; these bridges are implicated in subunit movement. Contacts the tRNAs in the A and P-sites. This Pseudomonas syringae pv. tomato (strain ATCC BAA-871 / DC3000) protein is Small ribosomal subunit protein uS13.